Reading from the N-terminus, the 44-residue chain is uncharacterized protein (44 aa).

An N-terminal signal peptide occupies residues 1–16 (MRISLLAVILALLFVA).

This is an uncharacterized protein from Helicobacter pylori (strain ATCC 700392 / 26695) (Campylobacter pylori).